A 160-amino-acid chain; its full sequence is Fluoride-specific ion channel FluC (160 aa).

The next 4 helical transmembrane spans lie at 5–25 (LFIS…GLLF), 34–54 (FGTL…LGLF), 67–87 (FLIT…SEVV), and 99–119 (FCVL…GIWI). Na(+) is bound by residues G74 and T77.

It belongs to the fluoride channel Fluc/FEX (TC 1.A.43) family.

It localises to the cell inner membrane. The enzyme catalyses fluoride(in) = fluoride(out). With respect to regulation, na(+) is not transported, but it plays an essential structural role and its presence is essential for fluoride channel function. In terms of biological role, fluoride-specific ion channel. Important for reducing fluoride concentration in the cell, thus reducing its toxicity. In Haemophilus influenzae (strain ATCC 51907 / DSM 11121 / KW20 / Rd), this protein is Fluoride-specific ion channel FluC.